The sequence spans 170 residues: Guided entry of tail-anchored proteins factor 1 (170 aa).

Topologically, residues 1–6 (MAAGFN) are lumenal. Residues 7 to 27 (WFLVLSSVFLCNLVKTFLPSI) traverse the membrane as a helical segment. The Cytoplasmic segment spans residues 28–96 (SSFLSKIFHK…KSRTAQQAKM (69 aa)). The interaction with GET3/TRC40 stretch occupies residues 35–93 (FHKDADQEMEMRTEIQNMKMELSTISMMDEFARYARLERKINKMTDQLKTLVKSRTAQQ). Residues 61-91 (MMDEFARYARLERKINKMTDQLKTLVKSRTA) are a coiled coil. Residues 97–117 (KWIVNIAFYILQAALMISLIL) traverse the membrane as a helical segment. Residues 118–137 (KYYADPVTVVPSKWIAPLER) lie on the Lumenal side of the membrane. Residues 138–158 (LVAFPSGVAGGVGITCWLVVC) traverse the membrane as a helical segment. Over 159–170 (NKVVALILQAVS) the chain is Cytoplasmic.

This sequence belongs to the WRB/GET1 family. Component of the Golgi to ER traffic (GET) complex, which is composed of GET1/WRB, CAMLG/GET2 and GET3/TRC40. Within the complex, GET1 and CAMLG form a heterotetramer which is stabilized by phosphatidylinositol binding and which binds to the GET3 homodimer.

The protein resides in the endoplasmic reticulum membrane. Its function is as follows. Required for the post-translational delivery of tail-anchored (TA) proteins to the endoplasmic reticulum (ER). Together with CAMLG/GET2, acts as a membrane receptor for soluble GET3/TRC40, which recognizes and selectively binds the transmembrane domain of TA proteins in the cytosol. Required to ensure correct topology and ER insertion of CAMLG. This is Guided entry of tail-anchored proteins factor 1 from Danio rerio (Zebrafish).